A 20-amino-acid polypeptide reads, in one-letter code: Hemocyanin subunit Ia (20 aa).

The segment at 1–20 (ADXQPGDSTDKLLAQKQDDV) is disordered.

Belongs to the tyrosinase family. Hemocyanin subfamily. In terms of assembly, composed of 3 major subunits (IB, II and III) and 1 minor subunit (IA) which form homohexamers and heterohexamers. May also form larger structures. Hemolymph.

The protein resides in the secreted. It is found in the extracellular space. Functionally, hemocyanins are copper-containing oxygen carriers occurring freely dissolved in the hemolymph of many mollusks and arthropods. The sequence is that of Hemocyanin subunit Ia from Panulirus japonicus (Japanese spiny lobster).